The sequence spans 601 residues: MAESYLQNGFRRKTLSVKVGNLFVGSEHSIKIQSMTTTATTDVEGTVRQIYALQECGCEIVRVTVQGLKEVGACEQIKDRLVQQNVTIPLVADIHFFPQAAIHVADFVDKVRINPGNYVDKRNMFSGKIYSDEQYTRSLERLFEKFSPLVAKCKRLGRAMRIGVNHGSLSERIMQRYGDTIEGMVFSALEYAEVCVNMDYHNIVFSMKSSNPRTMVAAYRALARELDQRKWLYPLHLGVTEAGSGMDGMIKSSVGIGTLLSEGLGDTIRCSLTGSPTLEIPVCLDLLKETAKYSKSTKKYNPFEIYHSKQLTTQTTPKHFPVENVYGFLVGLTKDHLLTIEPNTLLQCLGVDITTGKKDLTSPDGVVIPKSMRSSAIVSEIEKHLRIFYKEDAPILNEMNEELWLSDKTLATPFVYFEVESIYQARRFFALRQNYSQPVCLSFSLKANLSKNSAAIDLSIRLGALLLDGLGSCVLFNFSDLKLARTLGFSILQSANIRSTTVEYISCPGCGRTLFDLPEVSQRIKERTKHLPGGLKIAVMGCIVNGPGEMADADFGYVGSKPGMIDLYVKHKCVKSYVPMENAEEELIQLLKEHGVWKEPE.

[4Fe-4S] cluster contacts are provided by Cys507, Cys510, Cys542, and Glu549.

This sequence belongs to the IspG family. It depends on [4Fe-4S] cluster as a cofactor.

It catalyses the reaction (2E)-4-hydroxy-3-methylbut-2-enyl diphosphate + oxidized [flavodoxin] + H2O + 2 H(+) = 2-C-methyl-D-erythritol 2,4-cyclic diphosphate + reduced [flavodoxin]. Its pathway is isoprenoid biosynthesis; isopentenyl diphosphate biosynthesis via DXP pathway; isopentenyl diphosphate from 1-deoxy-D-xylulose 5-phosphate: step 5/6. Its function is as follows. Converts 2C-methyl-D-erythritol 2,4-cyclodiphosphate (ME-2,4cPP) into 1-hydroxy-2-methyl-2-(E)-butenyl 4-diphosphate. This is 4-hydroxy-3-methylbut-2-en-1-yl diphosphate synthase (flavodoxin) from Chlamydia muridarum (strain MoPn / Nigg).